We begin with the raw amino-acid sequence, 206 residues long: Transcription factor BTF3 (206 aa).

The interval methionine 1 to glutamate 42 is disordered. Residue arginine 19 is modified to Omega-N-methylarginine. Serine 30 is modified (phosphoserine). 2 positions are modified to N6-methyllysine: lysine 46 and lysine 54. Residues threonine 82–leucine 147 form the NAC-A/B domain. The residue at position 160 (threonine 160) is a Phosphothreonine. The disordered stretch occupies residues proline 170 to asparagine 206. Serine 173 is subject to Phosphoserine. Acidic residues predominate over residues glycine 183–aspartate 198.

Belongs to the NAC-beta family. As to quaternary structure, part of the nascent polypeptide-associated complex (NAC), which is a heterodimer of NACA and BTF3 (via NAC-A/B domains). NAC associates with ribosomes through the BTF3/NACB subunit. Both subunits can contact nascent polypeptide chains.

The protein localises to the cytoplasm. It is found in the nucleus. Its function is as follows. When associated with NACA, prevents inappropriate targeting of non-secretory polypeptides to the endoplasmic reticulum (ER). Binds to nascent polypeptide chains as they emerge from the ribosome and blocks their interaction with the signal recognition particle (SRP), which normally targets nascent secretory peptides to the ER. BTF3 is also a general transcription factor that can form a stable complex with RNA polymerase II. Required for the initiation of transcription. The sequence is that of Transcription factor BTF3 (BTF3) from Homo sapiens (Human).